Reading from the N-terminus, the 247-residue chain is NAD(P)H-quinone oxidoreductase subunit K, chloroplastic (247 aa).

Cys64, Cys65, Cys129, and Cys160 together coordinate [4Fe-4S] cluster.

The protein belongs to the complex I 20 kDa subunit family. NDH is composed of at least 16 different subunits, 5 of which are encoded in the nucleus. [4Fe-4S] cluster serves as cofactor.

The protein localises to the plastid. It is found in the chloroplast thylakoid membrane. The catalysed reaction is a plastoquinone + NADH + (n+1) H(+)(in) = a plastoquinol + NAD(+) + n H(+)(out). The enzyme catalyses a plastoquinone + NADPH + (n+1) H(+)(in) = a plastoquinol + NADP(+) + n H(+)(out). In terms of biological role, NDH shuttles electrons from NAD(P)H:plastoquinone, via FMN and iron-sulfur (Fe-S) centers, to quinones in the photosynthetic chain and possibly in a chloroplast respiratory chain. The immediate electron acceptor for the enzyme in this species is believed to be plastoquinone. Couples the redox reaction to proton translocation, and thus conserves the redox energy in a proton gradient. The protein is NAD(P)H-quinone oxidoreductase subunit K, chloroplastic of Mesostigma viride (Green alga).